Consider the following 125-residue polypeptide: Mini-ribonuclease 3 (125 aa).

Residue Asp11 is part of the active site.

Belongs to the MrnC RNase family. Homodimer. Requires Mg(2+) as cofactor.

The protein resides in the cytoplasm. In terms of biological role, involved in correct processing of both the 5' and 3' ends of 23S rRNA precursor. Processes 30S rRNA precursor transcript even in absence of ribonuclease 3 (Rnc); Rnc processes 30S rRNA into smaller rRNA precursors. The sequence is that of Mini-ribonuclease 3 from Acholeplasma laidlawii (strain PG-8A).